The sequence spans 160 residues: 6,7-dimethyl-8-ribityllumazine synthase (160 aa).

Residues tryptophan 27, 59–61 (AIE), and 81–83 (VVI) contribute to the 5-amino-6-(D-ribitylamino)uracil site. 86-87 (QT) provides a ligand contact to (2S)-2-hydroxy-3-oxobutyl phosphate. Residue histidine 89 is the Proton donor of the active site. A 5-amino-6-(D-ribitylamino)uracil-binding site is contributed by asparagine 114. Arginine 128 is a (2S)-2-hydroxy-3-oxobutyl phosphate binding site.

The protein belongs to the DMRL synthase family. In terms of assembly, homopentamer.

The catalysed reaction is (2S)-2-hydroxy-3-oxobutyl phosphate + 5-amino-6-(D-ribitylamino)uracil = 6,7-dimethyl-8-(1-D-ribityl)lumazine + phosphate + 2 H2O + H(+). It participates in cofactor biosynthesis; riboflavin biosynthesis; riboflavin from 2-hydroxy-3-oxobutyl phosphate and 5-amino-6-(D-ribitylamino)uracil: step 1/2. Its function is as follows. Catalyzes the formation of 6,7-dimethyl-8-ribityllumazine by condensation of 5-amino-6-(D-ribitylamino)uracil with 3,4-dihydroxy-2-butanone 4-phosphate. This is the penultimate step in the biosynthesis of riboflavin. This chain is 6,7-dimethyl-8-ribityllumazine synthase, found in Mycobacterium avium (strain 104).